The primary structure comprises 410 residues: Lissencephaly-1 homolog A (410 aa).

One can recognise a LisH domain in the interval 7–39; it reads QRDELNRAIADYLRSNGYEEAYSTFKKEAELDM. The stretch at 56–82 forms a coiled coil; sequence TSVIRLQKKVMELESKLNEAKEEITLG. WD repeat units lie at residues 106–147, 148–187, 190–229, 232–271, 274–333, 336–375, and 378–410; these read GHRS…RTLK, GHTD…CIRT, GHDH…CVKT, GHRE…CKAE, EHEH…CLMT, GHDN…CMKT, and AHEH…WECR.

The protein belongs to the WD repeat LIS1/nudF family. In terms of assembly, can self-associate. Component of the cytosolic PAF-AH (I) heterotetrameric enzyme, which is composed of PAFAH1B1 (beta), PAFAH1B2 (alpha2) and PAFAH1B3 (alpha1) subunits. The catalytic activity of the enzyme resides in the alpha1 (PAFAH1B3) and alpha2 (PAFAH1B2) subunits, whereas the beta subunit (PAFAH1B1) has regulatory activity. Trimer formation is not essential for the catalytic activity. Interacts with dynein, dynactin, nde1 and ndel1.

It localises to the cytoplasm. The protein resides in the cytoskeleton. The protein localises to the microtubule organizing center. Its subcellular location is the centrosome. Regulatory subunit (beta subunit) of the cytosolic type I platelet-activating factor (PAF) acetylhydrolase (PAF-AH (I)), an enzyme that catalyzes the hydrolyze of the acetyl group at the sn-2 position of PAF and its analogs and participates in PAF inactivation. Regulates the PAF-AH (I) activity in a catalytic dimer composition-dependent manner. Positively regulates the activity of the minus-end directed microtubule motor protein dynein. May enhance dynein-mediated microtubule sliding by targeting dynein to the microtubule plus end. Required for several dynein- and microtubule-dependent processes such as the maintenance of Golgi integrity, the peripheral transport of microtubule fragments and the coupling of the nucleus and centrosome. May be required for proliferation of neuronal precursors and neuronal migration. The polypeptide is Lissencephaly-1 homolog A (pafah1b1-1) (Salmo salar (Atlantic salmon)).